Here is a 316-residue protein sequence, read N- to C-terminus: Aspartate carbamoyltransferase catalytic subunit (316 aa).

Carbamoyl phosphate contacts are provided by Arg-66 and Thr-67. An L-aspartate-binding site is contributed by Lys-94. Carbamoyl phosphate is bound by residues Arg-116, His-146, and Gln-149. Arg-180 and Arg-235 together coordinate L-aspartate. The carbamoyl phosphate site is built by Gly-276 and Pro-277.

The protein belongs to the aspartate/ornithine carbamoyltransferase superfamily. ATCase family. In terms of assembly, heterododecamer (2C3:3R2) of six catalytic PyrB chains organized as two trimers (C3), and six regulatory PyrI chains organized as three dimers (R2).

The enzyme catalyses carbamoyl phosphate + L-aspartate = N-carbamoyl-L-aspartate + phosphate + H(+). It functions in the pathway pyrimidine metabolism; UMP biosynthesis via de novo pathway; (S)-dihydroorotate from bicarbonate: step 2/3. Its function is as follows. Catalyzes the condensation of carbamoyl phosphate and aspartate to form carbamoyl aspartate and inorganic phosphate, the committed step in the de novo pyrimidine nucleotide biosynthesis pathway. This chain is Aspartate carbamoyltransferase catalytic subunit, found in Stenotrophomonas maltophilia (strain K279a).